The following is a 646-amino-acid chain: Nitrous-oxide reductase (646 aa).

The interval 1–21 (MMSKHPHSPSTPQDETPSVPG) is disordered. A signal peptide (tat-type signal) is located at residues 1-52 (MMSKHPHSPSTPQDETPSVPGRRRFMNSAALAGLATVVACTDKGAPAGSAAA). Cu cation-binding residues include His140, His141, and His189. Positions 272, 275, 283, 289, and 342 each coordinate Ca(2+). Cu cation-binding residues include His344, His400, and His452. Positions 473 and 488 each coordinate Ca(2+). 7 residues coordinate Cu cation: His513, His592, Cys627, His629, Cys631, His635, and Met638. Residues 551–646 (KKVTVRLTSQ…EMRSRMIVEA (96 aa)) are COX2-like.

It belongs to the NosZ family. In the C-terminal section; belongs to the cytochrome c oxidase subunit 2 family. In terms of assembly, homodimer. Ca(2+) is required as a cofactor. The cofactor is Cu cation. In terms of processing, predicted to be exported by the Tat system. The position of the signal peptide cleavage has not been experimentally proven.

It is found in the periplasm. It catalyses the reaction N2 + 2 Fe(III)-[cytochrome c] + H2O = nitrous oxide + 2 Fe(II)-[cytochrome c] + 2 H(+). It functions in the pathway nitrogen metabolism; nitrate reduction (denitrification); dinitrogen from nitrate: step 4/4. Its function is as follows. Nitrous-oxide reductase is part of a bacterial respiratory system which is activated under anaerobic conditions in the presence of nitrate or nitrous oxide. The chain is Nitrous-oxide reductase (nosZ) from Ralstonia nicotianae (strain ATCC BAA-1114 / GMI1000) (Ralstonia solanacearum).